The chain runs to 222 residues: U-scoloptoxin(11)-Sm5a (222 aa).

This sequence belongs to the scoloptoxin-11 family. Post-translationally, contains 8 disulfide bonds. As to expression, expressed by the venom gland.

Its subcellular location is the secreted. In Scolopendra morsitans (Tanzanian blue ringleg centipede), this protein is U-scoloptoxin(11)-Sm5a.